The primary structure comprises 644 residues: Methionine--tRNA ligase (644 aa).

A 'HIGH' region motif is present at residues 14 to 24; sequence YYPSAKLHIGN. The Zn(2+) site is built by cysteine 129, cysteine 132, cysteine 146, and cysteine 149. The short motif at 299–303 is the 'KMSKS' region element; the sequence is KMSKS. ATP is bound at residue lysine 302. The tRNA-binding domain occupies 542 to 644; the sequence is DVDKLDLRVV…EDIPTGSIVR (103 aa).

This sequence belongs to the class-I aminoacyl-tRNA synthetase family. MetG type 2A subfamily. Homodimer. Zn(2+) is required as a cofactor.

The protein resides in the cytoplasm. The enzyme catalyses tRNA(Met) + L-methionine + ATP = L-methionyl-tRNA(Met) + AMP + diphosphate. Is required not only for elongation of protein synthesis but also for the initiation of all mRNA translation through initiator tRNA(fMet) aminoacylation. The chain is Methionine--tRNA ligase (metG) from Clostridium acetobutylicum (strain ATCC 824 / DSM 792 / JCM 1419 / IAM 19013 / LMG 5710 / NBRC 13948 / NRRL B-527 / VKM B-1787 / 2291 / W).